We begin with the raw amino-acid sequence, 556 residues long: HIRA-interacting protein 3 (556 aa).

S27 is subject to Phosphoserine. Residues 64-77 are compositionally biased toward basic and acidic residues; sequence DEAASREDKLDLTK. Residues 64 to 426 are disordered; it reads DEAASREDKL…GRRGEDHPAV (363 aa). T84 bears the Phosphothreonine mark. Phosphoserine is present on residues S87, S98, S100, S125, S142, S143, S159, and S160. Low complexity predominate over residues 99 to 108; sequence ESESGSEASS. Basic and acidic residues predominate over residues 126 to 158; the sequence is PAKEENPRRASKAVEESSDEERQRDLPAQRGEE. Residues 168–177 show a composition bias toward basic residues; the sequence is KGKTRKKPVV. 4 positions are modified to phosphoserine: S196, S199, S223, and S227. Residues 209-224 are compositionally biased toward basic and acidic residues; the sequence is KKVEGNKGTKSLKESE. Residues 240 to 254 are compositionally biased toward acidic residues; it reads EEEVEEEEKEEDEEK. Over residues 260-269 the composition is skewed to basic residues; it reads RTRSNGRRKS. S289 and S291 each carry phosphoserine. A compositionally biased stretch (basic and acidic residues) spans 304–322; it reads DSGRDREPPVQRKSEDRTQ. A phosphoserine mark is found at S330, S332, S333, and S357. A Phosphothreonine modification is found at T358. Phosphoserine is present on residues S359, S363, S370, and S372. The segment covering 385–396 has biased composition (basic residues); the sequence is RSSKKSSRKGRT. The interaction with the histone H2A-H2B complex stretch occupies residues 403 to 527; that stretch reads SDGSPEAKGG…APPGELYRRT (125 aa). A Phosphothreonine modification is found at T471. A disordered region spans residues 502 to 556; sequence SGRPRRRTAWNPLGEAAPPGELYRRTLDSDEERPRPAPPDWSHMRGIISSDGESN. Over residues 523 to 536 the composition is skewed to basic and acidic residues; the sequence is LYRRTLDSDEERPR. 4 positions are modified to phosphoserine: S530, S550, S551, and S555.

Interacts (via C-terminus) with histone H2A-H2B dimers; the interaction is direct. Interacts with HIRA. Interacts with CK2. Post-translationally, phosphorylated by CK2. As to expression, widely expressed. Isoform 1 is predominant in skeletal muscle. Isoform 2 is predominant in liver and heart.

Its subcellular location is the nucleus. Its function is as follows. Histone chaperone that carries a H2A-H2B histone complex and facilitates its deposition onto chromatin. This is HIRA-interacting protein 3 (HIRIP3) from Homo sapiens (Human).